The sequence spans 269 residues: Tryptophan synthase alpha chain (269 aa).

Catalysis depends on proton acceptor residues glutamate 49 and aspartate 60.

The protein belongs to the TrpA family. In terms of assembly, tetramer of two alpha and two beta chains.

It carries out the reaction (1S,2R)-1-C-(indol-3-yl)glycerol 3-phosphate + L-serine = D-glyceraldehyde 3-phosphate + L-tryptophan + H2O. The protein operates within amino-acid biosynthesis; L-tryptophan biosynthesis; L-tryptophan from chorismate: step 5/5. In terms of biological role, the alpha subunit is responsible for the aldol cleavage of indoleglycerol phosphate to indole and glyceraldehyde 3-phosphate. The chain is Tryptophan synthase alpha chain from Buchnera aphidicola subsp. Acyrthosiphon pisum (strain APS) (Acyrthosiphon pisum symbiotic bacterium).